Here is a 501-residue protein sequence, read N- to C-terminus: Ribose import ATP-binding protein RbsA (501 aa).

ABC transporter domains are found at residues 6 to 242 (LQLS…VGRK) and 253 to 495 (VHGQ…VGKK). Residue 38 to 45 (GENGAGKS) coordinates ATP.

It belongs to the ABC transporter superfamily. Ribose importer (TC 3.A.1.2.1) family. In terms of assembly, the complex is composed of an ATP-binding protein (RbsA), two transmembrane proteins (RbsC) and a solute-binding protein (RbsB).

Its subcellular location is the cell inner membrane. It catalyses the reaction D-ribose(out) + ATP + H2O = D-ribose(in) + ADP + phosphate + H(+). Functionally, part of the ABC transporter complex RbsABC involved in ribose import. Responsible for energy coupling to the transport system. The polypeptide is Ribose import ATP-binding protein RbsA (Vibrio vulnificus (strain YJ016)).